The chain runs to 32 residues: 24 kDa flagellin (32 aa).

Belongs to the archaeal flagellin family. Glycosylated.

The protein localises to the archaeal flagellum. Its function is as follows. Flagellin is the subunit protein which polymerizes to form the filaments of archaeal flagella. The protein is 24 kDa flagellin of Methanospirillum hungatei.